A 623-amino-acid polypeptide reads, in one-letter code: 1-deoxy-D-xylulose-5-phosphate synthase (623 aa).

Thiamine diphosphate-binding positions include His80 and 121 to 123 (GHS). Asp152 contacts Mg(2+). Residues 153-154 (GA), Asn181, Tyr289, and Glu372 contribute to the thiamine diphosphate site. Asn181 is a binding site for Mg(2+).

This sequence belongs to the transketolase family. DXPS subfamily. Homodimer. The cofactor is Mg(2+). Thiamine diphosphate serves as cofactor.

It carries out the reaction D-glyceraldehyde 3-phosphate + pyruvate + H(+) = 1-deoxy-D-xylulose 5-phosphate + CO2. Its pathway is metabolic intermediate biosynthesis; 1-deoxy-D-xylulose 5-phosphate biosynthesis; 1-deoxy-D-xylulose 5-phosphate from D-glyceraldehyde 3-phosphate and pyruvate: step 1/1. Its function is as follows. Catalyzes the acyloin condensation reaction between C atoms 2 and 3 of pyruvate and glyceraldehyde 3-phosphate to yield 1-deoxy-D-xylulose-5-phosphate (DXP). This chain is 1-deoxy-D-xylulose-5-phosphate synthase, found in Baumannia cicadellinicola subsp. Homalodisca coagulata.